We begin with the raw amino-acid sequence, 144 residues long: uncharacterized protein (144 aa).

Positions 1 to 23 are cleaved as a signal peptide; that stretch reads MRKILLFATVIGFLIMVSGTLSY.

This is an uncharacterized protein from Archaeoglobus fulgidus (strain ATCC 49558 / DSM 4304 / JCM 9628 / NBRC 100126 / VC-16).